Here is a 418-residue protein sequence, read N- to C-terminus: Phosphoglycerate kinase (418 aa).

Val23, Asp24, Phe25, Asn26, Gln39, Arg40, Ser63, His64, Gly66, Arg67, Leu122, Arg123, His170, and Arg171 together coordinate (2R)-3-phosphoglycerate. Residue Gly214 coordinates ADP. Position 214 (Gly214) interacts with CDP. 2 residues coordinate AMP: Ala215 and Lys216. An ATP-binding site is contributed by Ala215. Ala215 provides a ligand contact to Mg(2+). Asp219 serves as a coordination point for CDP. Asp219 serves as a coordination point for Mg(2+). Residue Lys220 coordinates AMP. Position 220 (Lys220) interacts with ATP. Position 238 (Gly238) interacts with ADP. A CDP-binding site is contributed by Gly238. Positions 239 and 313 each coordinate AMP. The ATP site is built by Gly239 and Gly313. CDP is bound by residues Gly338, Ala340, and Phe343. ADP is bound at residue Phe343. Residue Glu344 coordinates AMP. The ATP site is built by Glu344, Asp375, and Thr376. Asp375 lines the Mg(2+) pocket.

This sequence belongs to the phosphoglycerate kinase family. As to quaternary structure, monomer. It depends on Mg(2+) as a cofactor.

It is found in the cytoplasm. It localises to the mitochondrion. The catalysed reaction is (2R)-3-phosphoglycerate + ATP = (2R)-3-phospho-glyceroyl phosphate + ADP. Its pathway is carbohydrate degradation; glycolysis; pyruvate from D-glyceraldehyde 3-phosphate: step 2/5. In terms of biological role, catalyzes one of the two ATP producing reactions in the glycolytic pathway via the reversible conversion of 1,3-diphosphoglycerate to 3-phosphoglycerate. Both L- and D- forms of purine and pyrimidine nucleotides can be used as substrates, but the activity is much lower on pyrimidines. Negatively regulates the biosynthesis of acetyl-CoA from pyruvate in the mitochondrion. The polypeptide is Phosphoglycerate kinase (pgk-1) (Neurospora crassa (strain ATCC 24698 / 74-OR23-1A / CBS 708.71 / DSM 1257 / FGSC 987)).